Reading from the N-terminus, the 152-residue chain is CASP-like protein 5C3 (152 aa).

At M1–R17 the chain is on the cytoplasmic side. A helical transmembrane segment spans residues L18–Y38. Over Q39–A42 the chain is Extracellular. Residues F43 to V63 traverse the membrane as a helical segment. Topologically, residues D64–R78 are cytoplasmic. A helical transmembrane segment spans residues I79 to S99. Residues S100–T128 are Extracellular-facing. N-linked (GlcNAc...) asparagine glycosylation is present at N111. The helical transmembrane segment at L129–P149 threads the bilayer. At S150–I152 the chain is on the cytoplasmic side.

Belongs to the Casparian strip membrane proteins (CASP) family. As to quaternary structure, homodimer and heterodimers. As to expression, expressed in the floral organ abscission zone and flower buds.

The protein resides in the cell membrane. This chain is CASP-like protein 5C3, found in Arabidopsis thaliana (Mouse-ear cress).